Consider the following 157-residue polypeptide: Cyclic pyranopterin monophosphate synthase (157 aa).

Substrate is bound by residues 74-76 (MCH) and 112-113 (ME). Aspartate 127 is an active-site residue.

This sequence belongs to the MoaC family. In terms of assembly, homohexamer; trimer of dimers.

It carries out the reaction (8S)-3',8-cyclo-7,8-dihydroguanosine 5'-triphosphate = cyclic pyranopterin phosphate + diphosphate. The protein operates within cofactor biosynthesis; molybdopterin biosynthesis. Its function is as follows. Catalyzes the conversion of (8S)-3',8-cyclo-7,8-dihydroguanosine 5'-triphosphate to cyclic pyranopterin monophosphate (cPMP). The chain is Cyclic pyranopterin monophosphate synthase from Sulfurovum sp. (strain NBC37-1).